The primary structure comprises 629 residues: tRNA uridine 5-carboxymethylaminomethyl modification enzyme MnmG (629 aa).

13-18 serves as a coordination point for FAD; sequence GGGHAG. Residue 273–287 coordinates NAD(+); the sequence is GPRYCPSIEDKIVRF.

This sequence belongs to the MnmG family. As to quaternary structure, homodimer. Heterotetramer of two MnmE and two MnmG subunits. The cofactor is FAD.

Its subcellular location is the cytoplasm. In terms of biological role, NAD-binding protein involved in the addition of a carboxymethylaminomethyl (cmnm) group at the wobble position (U34) of certain tRNAs, forming tRNA-cmnm(5)s(2)U34. This is tRNA uridine 5-carboxymethylaminomethyl modification enzyme MnmG from Marinomonas sp. (strain MWYL1).